Reading from the N-terminus, the 434-residue chain is Histidinol dehydrogenase (434 aa).

Residues Tyr130, Gln191, and Asn214 each coordinate NAD(+). Residues Ser237, Gln259, and His262 each contribute to the substrate site. Positions 259 and 262 each coordinate Zn(2+). Residues Glu327 and His328 each act as proton acceptor in the active site. Residues His328, Asp361, Glu415, and His420 each coordinate substrate. Asp361 provides a ligand contact to Zn(2+). His420 contacts Zn(2+).

It belongs to the histidinol dehydrogenase family. It depends on Zn(2+) as a cofactor.

The catalysed reaction is L-histidinol + 2 NAD(+) + H2O = L-histidine + 2 NADH + 3 H(+). The protein operates within amino-acid biosynthesis; L-histidine biosynthesis; L-histidine from 5-phospho-alpha-D-ribose 1-diphosphate: step 9/9. Catalyzes the sequential NAD-dependent oxidations of L-histidinol to L-histidinaldehyde and then to L-histidine. The chain is Histidinol dehydrogenase from Chromobacterium violaceum (strain ATCC 12472 / DSM 30191 / JCM 1249 / CCUG 213 / NBRC 12614 / NCIMB 9131 / NCTC 9757 / MK).